We begin with the raw amino-acid sequence, 351 residues long: Uroporphyrinogen decarboxylase (351 aa).

Residues 25 to 29, Asp-74, Tyr-151, Ser-206, and His-325 each bind substrate; that span reads RQAGR.

This sequence belongs to the uroporphyrinogen decarboxylase family. In terms of assembly, homodimer.

The protein localises to the cytoplasm. It catalyses the reaction uroporphyrinogen III + 4 H(+) = coproporphyrinogen III + 4 CO2. The protein operates within porphyrin-containing compound metabolism; protoporphyrin-IX biosynthesis; coproporphyrinogen-III from 5-aminolevulinate: step 4/4. In terms of biological role, catalyzes the decarboxylation of four acetate groups of uroporphyrinogen-III to yield coproporphyrinogen-III. The protein is Uroporphyrinogen decarboxylase of Chlorobium phaeobacteroides (strain DSM 266 / SMG 266 / 2430).